Here is a 281-residue protein sequence, read N- to C-terminus: 4-diphosphocytidyl-2-C-methyl-D-erythritol kinase (281 aa).

Catalysis depends on residues Lys-11 and Asp-138.

The protein belongs to the GHMP kinase family. IspE subfamily.

The enzyme catalyses 4-CDP-2-C-methyl-D-erythritol + ATP = 4-CDP-2-C-methyl-D-erythritol 2-phosphate + ADP + H(+). It functions in the pathway isoprenoid biosynthesis; isopentenyl diphosphate biosynthesis via DXP pathway; isopentenyl diphosphate from 1-deoxy-D-xylulose 5-phosphate: step 3/6. Its function is as follows. Catalyzes the phosphorylation of the position 2 hydroxy group of 4-diphosphocytidyl-2C-methyl-D-erythritol. This Pelagibacter ubique (strain HTCC1062) protein is 4-diphosphocytidyl-2-C-methyl-D-erythritol kinase.